Reading from the N-terminus, the 1499-residue chain is MAFAIGTSPIKRDFTRIKISVASPESILARSRGEVLKPETINYRTYKPERDGLMCEKIFGPTKDWECYCGKYKRVRYKGIICDRCGVEVTSKSVRRERMGHISLAVPVVHTWFFRSVPSKIGALLDLSTKELERIIYYEVFVVINPGEPGRKQGLKMMDRLTEEQYYQIITEYEDNQDLDDDDPDKFVAKMGGEAIKALLKRLDLDSTAKELRRILKESQSEQKKADALKRLKVVEAFRASYEPYSKEAKKKEEFSLEPPEPYRYEGNKPEYMVMEVIPVIPPELRPLVPLEGGRFATSDLNDLYRRVIIRNNRLKKLLDIRAPEVILRNEKRMLQEAVDALFDNSRKANAVKSGDSNRALKSLSDSLKGKQGRFRQNLLGKRVDYSGRSVIVVGPELRLHQCGLPKDMAIELFQPFVIRRLVERGYAKSVKSAKKLIDRKDPAIWDVLEKVIEGHPIMLNRAPTLHRLGIQAFQPVLVEGKALQLHPLVCTAFNADFDGDQMAVHIPLSQEAQMEAMMLMLSSHNLILPQSGKPVTVPSQDMVLGVYYLTKVRKGARGEGNIFANTEDVVIAYNEGEVDLHARIFVRYDKPRDEKNDVLSFIDAIPESKPEKRKWVKEQLEAKTLMATTVGRVLFSQVMPETISFINKVLDKKTAKDLIAHVISKVGTVRAEKFLDDVKGLGFNMAMRGGLSIGLSDAIVPETKKRYIKEAIKNSNKIIKEYNTGMLTENEKYNKIVDVWQNVTNIVSDESYQTLRKDRDGFNPLFMMLDSGARGSRNQARQLTGMRGLIARPQKSMSGQPGEIIENPIISNLREGLTVLEYFISTHGARKGLSDTSLKTADAGYLTRRLHDVAQDVIVTEDDCGTTMGIHIRRDEEEVAGKVKFHDKLRGRYVAHDVVDSITEQVVLKAGDLITDEIAEELRLNVGVTDVMIRSVLTCDSKRGICAKCYGTNLASGRQVDAGEAVGVIAAQSIGEPGTQLTLRTFHQGGAAQGGIAETEIRSQYEGQLEFENIQMVQSKTFNEDGAEEVHDIVIRKNGVMNIVDPSTGKILKRMIVPYGAKMNCKDGDMVQKGSLLYGVEPNSTPILAEKDGVIKFVDIEKGVTYKEESDQQTGHVQRVIINWRSRVRTVDIREPRIQLLTHHGELIASYPIPIKANLHSEDGATVHAGDVLAKVPRDLTRIGGDITAGLPRVTELFEARNPSDPAVVSEIDGIVTFGSQRRNNKEVKVKNAYDDERIYLVPIGKHILVNEGDEVRAGDPITDGSISPQDILRIQGPNAVQQYLVNEIQKVYQINAGVEINDKHLEVIVRQMLQKVQVEDSGDTHLMPGDLIDKTTFKDVNSKIQGKVRVSEKGDARNIQEGELYAKEEIGRLNRELRKNNRVLVTFEPAVPATSRPVLLGITSAALQTESFISAASFQETTKVLTDAAVEGKTDFLAGLKENVIVGKLIPAGTGLKRYRSLRISTANLQDSYEPSQRAYQEDEYAKKEDGEIAIDD.

Residues cysteine 67, cysteine 69, cysteine 82, and cysteine 85 each contribute to the Zn(2+) site. Positions 497, 499, and 501 each coordinate Mg(2+). Cysteine 865, cysteine 940, cysteine 947, and cysteine 950 together coordinate Zn(2+). The segment at tyrosine 1475–aspartate 1499 is disordered. The segment covering tyrosine 1482–glycine 1493 has biased composition (basic and acidic residues).

It belongs to the RNA polymerase beta' chain family. In terms of assembly, the RNAP catalytic core consists of 2 alpha, 1 beta, 1 beta' and 1 omega subunit. When a sigma factor is associated with the core the holoenzyme is formed, which can initiate transcription. Mg(2+) serves as cofactor. Requires Zn(2+) as cofactor.

It carries out the reaction RNA(n) + a ribonucleoside 5'-triphosphate = RNA(n+1) + diphosphate. Its function is as follows. DNA-dependent RNA polymerase catalyzes the transcription of DNA into RNA using the four ribonucleoside triphosphates as substrates. The sequence is that of DNA-directed RNA polymerase subunit beta' from Chloroherpeton thalassium (strain ATCC 35110 / GB-78).